An 819-amino-acid polypeptide reads, in one-letter code: Zinc finger protein 658B (819 aa).

The segment at 141-166 (YLSDEHGKCRKSFYWKAHLIQHERPH) adopts a C2H2-type 1; degenerate zinc-finger fold. C2H2-type zinc fingers lie at residues 200-222 (YECN…LRIH), 278-300 (YECI…QRIH), 306-328 (YECV…QRVH), 334-356 (YECN…QRIH), 362-384 (YECS…HRIH), 390-412 (YECN…QRIH), 418-440 (YECN…QRIH), 446-468 (YECS…QRIH), 474-496 (YKCN…QNIH), 502-524 (YECS…RRIH), 530-552 (YECS…ERIH), 558-580 (YECN…QRIH), 586-608 (YECN…QRIH), and 614-636 (YECN…HRIH). Residues 642–664 (YECNDCGKTFSKTSHLRAHLRTR) form a C2H2-type 16; degenerate zinc finger. C2H2-type zinc fingers lie at residues 670–692 (YECS…QRVH), 698–720 (YECN…QRIH), 726–748 (YECN…QRIH), 754–776 (YECN…QRIH), and 782–805 (YECD…TRMH).

This sequence belongs to the krueppel C2H2-type zinc-finger protein family.

It is found in the nucleus. May be involved in transcriptional regulation. The polypeptide is Zinc finger protein 658B (ZNF658B) (Homo sapiens (Human)).